Reading from the N-terminus, the 345-residue chain is MKKTLREIAEYLGGTVSGDGEVLIGGLATLDDAGEGTLTFLANPKYAAKVATTKASAVLMGTGGNTHGKNAIFHPNPYLAFAKLLTLFYTAPAKPVGVLPGAFVADGVKLGADVSVYPGASIGAGAVIGDRVVLHPGVVLYPGVVVGNDVTLHANVSVRERCRIGNRVTIHDGTVIGSDGFGYAPDGASYYKIPQIGIVIIEDDVEIGSNCVIDRAALEATRIRRGTKIDNLVQIAHNVVIGEDCIIVSQVGISGSTQLGNHVTLGGQVGVAGHIKIGDNVMIGAKSGVAGNVEPNQVLSGIPVMPHRDWLRSAGIAPKLPEMKKTLSALEKRVAELEAKLAKGE.

The active-site Proton acceptor is the His237.

The protein belongs to the transferase hexapeptide repeat family. LpxD subfamily. In terms of assembly, homotrimer.

The catalysed reaction is a UDP-3-O-[(3R)-3-hydroxyacyl]-alpha-D-glucosamine + a (3R)-hydroxyacyl-[ACP] = a UDP-2-N,3-O-bis[(3R)-3-hydroxyacyl]-alpha-D-glucosamine + holo-[ACP] + H(+). Its pathway is bacterial outer membrane biogenesis; LPS lipid A biosynthesis. In terms of biological role, catalyzes the N-acylation of UDP-3-O-acylglucosamine using 3-hydroxyacyl-ACP as the acyl donor. Is involved in the biosynthesis of lipid A, a phosphorylated glycolipid that anchors the lipopolysaccharide to the outer membrane of the cell. In Geobacter sp. (strain M21), this protein is UDP-3-O-acylglucosamine N-acyltransferase.